The sequence spans 933 residues: Phosphoenolpyruvate carboxylase (933 aa).

Catalysis depends on residues histidine 158 and lysine 592.

Belongs to the PEPCase type 1 family. It depends on Mg(2+) as a cofactor.

It carries out the reaction oxaloacetate + phosphate = phosphoenolpyruvate + hydrogencarbonate. Functionally, forms oxaloacetate, a four-carbon dicarboxylic acid source for the tricarboxylic acid cycle. This Nitrosomonas eutropha (strain DSM 101675 / C91 / Nm57) protein is Phosphoenolpyruvate carboxylase.